Reading from the N-terminus, the 158-residue chain is MTCLYPGTFDPITNGHLDVIKRALKIFDEVIVAIAKSEHKKPCYDLEKRKELALLATQNLKNVKIIAFDNLLVDLAKELKVNTIIRGLRAVSDFEYELQIGYANHALWEDMETIYLMPSLKHAFISSSIVRSIVAHGGDVSSLVPKEILPFLKDQSCM.

Substrate is bound at residue threonine 8. ATP is bound by residues 8 to 9 and histidine 16; that span reads TF. 3 residues coordinate substrate: lysine 40, leucine 72, and arginine 86. ATP is bound by residues 87–89, glutamate 97, and 122–128; these read GLR and HAFISSS.

This sequence belongs to the bacterial CoaD family. Homohexamer. Mg(2+) is required as a cofactor.

The protein resides in the cytoplasm. The enzyme catalyses (R)-4'-phosphopantetheine + ATP + H(+) = 3'-dephospho-CoA + diphosphate. It functions in the pathway cofactor biosynthesis; coenzyme A biosynthesis; CoA from (R)-pantothenate: step 4/5. Reversibly transfers an adenylyl group from ATP to 4'-phosphopantetheine, yielding dephospho-CoA (dPCoA) and pyrophosphate. This chain is Phosphopantetheine adenylyltransferase, found in Campylobacter jejuni subsp. jejuni serotype O:6 (strain 81116 / NCTC 11828).